Here is a 303-residue protein sequence, read N- to C-terminus: Serine/threonine-protein phosphatase 6 catalytic subunit (303 aa).

D51, H53, D79, and N111 together coordinate Mn(2+). The active-site Proton donor is the H112. Mn(2+)-binding residues include H161 and H235.

The protein belongs to the PPP phosphatase family. PP-6 (PP-V) subfamily. Mn(2+) is required as a cofactor.

The protein localises to the cytoplasm. It carries out the reaction O-phospho-L-seryl-[protein] + H2O = L-seryl-[protein] + phosphate. The enzyme catalyses O-phospho-L-threonyl-[protein] + H2O = L-threonyl-[protein] + phosphate. Its function is as follows. May be involved in controlling cellularization or in regulating transcription of the genes involved in this process. This chain is Serine/threonine-protein phosphatase 6 catalytic subunit (PpV), found in Drosophila melanogaster (Fruit fly).